We begin with the raw amino-acid sequence, 313 residues long: Porphobilinogen deaminase (313 aa).

Residue Cys-242 is modified to S-(dipyrrolylmethanemethyl)cysteine.

It belongs to the HMBS family. Monomer. It depends on dipyrromethane as a cofactor.

It catalyses the reaction 4 porphobilinogen + H2O = hydroxymethylbilane + 4 NH4(+). The protein operates within porphyrin-containing compound metabolism; protoporphyrin-IX biosynthesis; coproporphyrinogen-III from 5-aminolevulinate: step 2/4. Its function is as follows. Tetrapolymerization of the monopyrrole PBG into the hydroxymethylbilane pre-uroporphyrinogen in several discrete steps. This Pseudomonas aeruginosa (strain LESB58) protein is Porphobilinogen deaminase.